A 630-amino-acid polypeptide reads, in one-letter code: MKEVRVVICGDQGVGKSSLISALIQEDNVTSIPKVFPIISIPSNPDSNDDVSLVLVDTQSDSNEREYLAAEIKKANVICLVYSDNYSYERVSIFWLPYFRSLGVNVPIVLCENKSEDLDNYQGLHTIEHEMIPLINEFKEIEACILCSALEKINVNELFYMCRACVIYPITPLWDAKERTMRKATIHALSRIFFLIDKNNDDLLSVDELNSLSEKCFSKNLSIEDASEILSKVKEICPEGVYEGQLTLPGFLAYNRVQVENGKQESTWGILRAFHYTDSLSLDDSYLSPKFEVAPGQIVELSPKGYRFLVDLFYQFDRDNDGALNNEELSALFRHTPGLPEIWVSSQFPNSTVLNEHGYVTYNGWLAQWSMITLFDYKTTLAYLAYLGFDTDGRGHNTDALKVMRKRVSQNRKVSKYDRNVFLCFVVGSKSCGKTALLSSFINNNTNRLTPNTVVNSVEFQSTQRYLVLSEIGETDLDILAEPKSLEACDILCLLYDSSNPNSFSFIANLLNLYPDLQKIPCVFAATKADLDRQQQRYPVQPDEFTKQLGLPSPTHISTAAIWNTSKEFFIQLAESAQYPASSIIRIPEEDSNKTNYQLVAALTAFGALLLSVGGSLTWKIIKHQYYSKK.

Residues 1–168 (MKEVRVVICG…FYMCRACVIY (168 aa)) form the Miro 1 domain. Topologically, residues 1-598 (MKEVRVVICG…EEDSNKTNYQ (598 aa)) are cytoplasmic. GTP is bound by residues 10 to 17 (GDQGVGKS), 57 to 61 (DTQSD), and 113 to 116 (NKSE). 2 EF-hand domains span residues 184–219 (ATIH…CFSK) and 304–339 (KGYR…TPGL). Residues Asp197, Asn199, Asp201, Glu208, Asp317, Asp319, Asp321, and Glu328 each coordinate Ca(2+). The Miro 2 domain occupies 419–579 (RNVFLCFVVG…FIQLAESAQY (161 aa)). GTP-binding positions include 428 to 435 (GSKSCGKT), 459 to 463 (EFQST), and 527 to 530 (TKAD). The chain crosses the membrane as a helical; Anchor for type IV membrane protein span at residues 599-619 (LVAALTAFGALLLSVGGSLTW). Topologically, residues 620 to 630 (KIIKHQYYSKK) are mitochondrial intermembrane.

Belongs to the mitochondrial Rho GTPase family.

The protein localises to the mitochondrion outer membrane. Its function is as follows. Mitochondrial GTPase involved in mitochondrial trafficking. Probably involved in control of anterograde transport of mitochondria and their subcellular distribution. The polypeptide is Mitochondrial Rho GTPase 1 (gem1) (Schizosaccharomyces pombe (strain 972 / ATCC 24843) (Fission yeast)).